Consider the following 305-residue polypeptide: RxLR effector protein PexRD25 (305 aa).

Positions 1 to 16 (MRFLFYMLLACSAVVA) are cleaved as a signal peptide. The RxLR-dEER signature appears at 44 to 56 (RLLRDRRSVDEER).

This sequence belongs to the RxLR effector family.

The protein resides in the secreted. Its subcellular location is the host nucleus. It localises to the host nucleolus. Its function is as follows. Effector that enhances P.infestans colonization of Nicotiana benthamiana leaves. The sequence is that of RxLR effector protein PexRD25 from Phytophthora infestans (strain T30-4) (Potato late blight agent).